A 184-amino-acid polypeptide reads, in one-letter code: ATP synthase subunit delta (184 aa).

It belongs to the ATPase delta chain family. In terms of assembly, F-type ATPases have 2 components, F(1) - the catalytic core - and F(0) - the membrane proton channel. F(1) has five subunits: alpha(3), beta(3), gamma(1), delta(1), epsilon(1). CF(0) has four main subunits: a(1), b(1), b'(1) and c(10-14). The alpha and beta chains form an alternating ring which encloses part of the gamma chain. F(1) is attached to F(0) by a central stalk formed by the gamma and epsilon chains, while a peripheral stalk is formed by the delta, b and b' chains.

The protein localises to the cellular thylakoid membrane. Its function is as follows. F(1)F(0) ATP synthase produces ATP from ADP in the presence of a proton or sodium gradient. F-type ATPases consist of two structural domains, F(1) containing the extramembraneous catalytic core and F(0) containing the membrane proton channel, linked together by a central stalk and a peripheral stalk. During catalysis, ATP synthesis in the catalytic domain of F(1) is coupled via a rotary mechanism of the central stalk subunits to proton translocation. Functionally, this protein is part of the stalk that links CF(0) to CF(1). It either transmits conformational changes from CF(0) to CF(1) or is implicated in proton conduction. The polypeptide is ATP synthase subunit delta (Gloeothece citriformis (strain PCC 7424) (Cyanothece sp. (strain PCC 7424))).